Consider the following 101-residue polypeptide: ATP-dependent Clp protease adapter protein ClpS (101 aa).

The protein belongs to the ClpS family. Binds to the N-terminal domain of the chaperone ClpA.

Functionally, involved in the modulation of the specificity of the ClpAP-mediated ATP-dependent protein degradation. The protein is ATP-dependent Clp protease adapter protein ClpS of Mycobacterium bovis (strain ATCC BAA-935 / AF2122/97).